Reading from the N-terminus, the 152-residue chain is 3-hydroxyacyl-[acyl-carrier-protein] dehydratase FabZ (152 aa).

The active site involves His-58.

This sequence belongs to the thioester dehydratase family. FabZ subfamily.

The protein localises to the cytoplasm. It carries out the reaction a (3R)-hydroxyacyl-[ACP] = a (2E)-enoyl-[ACP] + H2O. Involved in unsaturated fatty acids biosynthesis. Catalyzes the dehydration of short chain beta-hydroxyacyl-ACPs and long chain saturated and unsaturated beta-hydroxyacyl-ACPs. This is 3-hydroxyacyl-[acyl-carrier-protein] dehydratase FabZ from Prochlorococcus marinus (strain MIT 9301).